We begin with the raw amino-acid sequence, 78 residues long: U23-theraphotoxin-Cg1a 1 (78 aa).

The N-terminal stretch at 1–21 (MKTSVLVTVLGLAVISVLCSA) is a signal peptide. The propeptide occupies 22–49 (SQDEEQDMYDELLSAVFEVNDELQSEAR). 3 disulfide bridges follow: cysteine 50–cysteine 64, cysteine 57–cysteine 69, and cysteine 63–cysteine 75.

The protein belongs to the neurotoxin 10 (Hwtx-1) family. 64 (Jztx-20) subfamily. In terms of tissue distribution, expressed by the venom gland.

The protein resides in the secreted. Its function is as follows. Probable ion channel inhibitor. In Chilobrachys guangxiensis (Chinese earth tiger tarantula), this protein is U23-theraphotoxin-Cg1a 1.